A 131-amino-acid chain; its full sequence is Small ribosomal subunit protein uS8 (131 aa).

It belongs to the universal ribosomal protein uS8 family. In terms of assembly, part of the 30S ribosomal subunit. Contacts proteins S5 and S12.

Its function is as follows. One of the primary rRNA binding proteins, it binds directly to 16S rRNA central domain where it helps coordinate assembly of the platform of the 30S subunit. This is Small ribosomal subunit protein uS8 from Chlorobaculum tepidum (strain ATCC 49652 / DSM 12025 / NBRC 103806 / TLS) (Chlorobium tepidum).